A 191-amino-acid chain; its full sequence is Imidazoleglycerol-phosphate dehydratase (191 aa).

It belongs to the imidazoleglycerol-phosphate dehydratase family.

The protein resides in the cytoplasm. The catalysed reaction is D-erythro-1-(imidazol-4-yl)glycerol 3-phosphate = 3-(imidazol-4-yl)-2-oxopropyl phosphate + H2O. The protein operates within amino-acid biosynthesis; L-histidine biosynthesis; L-histidine from 5-phospho-alpha-D-ribose 1-diphosphate: step 6/9. This chain is Imidazoleglycerol-phosphate dehydratase, found in Methanosarcina barkeri (strain Fusaro / DSM 804).